A 730-amino-acid chain; its full sequence is UvrABC system protein C (730 aa).

Positions A16–V95 constitute a GIY-YIG domain. Residues D208–A243 enclose the UVR domain. Residues A678–Q730 form a disordered region.

Belongs to the UvrC family. In terms of assembly, interacts with UvrB in an incision complex.

It localises to the cytoplasm. Its function is as follows. The UvrABC repair system catalyzes the recognition and processing of DNA lesions. UvrC both incises the 5' and 3' sides of the lesion. The N-terminal half is responsible for the 3' incision and the C-terminal half is responsible for the 5' incision. This chain is UvrABC system protein C, found in Rhodococcus erythropolis (strain PR4 / NBRC 100887).